Reading from the N-terminus, the 897-residue chain is Patched domain-containing protein 1 (897 aa).

Residues 25–45 (PVFFLTVPAVLTIIFGSTVLS) traverse the membrane as a helical segment. N-linked (GlcNAc...) asparagine glycans are attached at residues Asn132, Asn167, and Asn179. A run of 2 helical transmembrane segments spans residues 271–291 (GVLA…AATI) and 306–326 (GLLG…IFFI). Positions 273 to 433 (LAKSEVLVSL…FSFYGSCLVF (161 aa)) constitute an SSD domain. Asn332 is a glycosylation site (N-linked (GlcNAc...) asparagine). Helical transmembrane passes span 335 to 355 (LLGI…ELLA), 377 to 397 (VMVC…MGAS), 414 to 434 (VAVL…LVFA), and 506 to 526 (PFVV…CLQI). N-linked (GlcNAc...) asparagine glycans are attached at residues Asn572 and Asn603. 3 helical membrane passes run 701–721 (PILT…FLVI), 727–747 (FWLI…MTLW), and 754–774 (ISIL…APHL). N-linked (GlcNAc...) asparagine glycosylation is present at Asn803. Transmembrane regions (helical) follow at residues 806–826 (CFVI…YTLF) and 831–851 (LTAG…LTFF). The span at 856–866 (KRHKKKKRAKR) shows a compositional bias: basic residues. The tract at residues 856–881 (KRHKKKKRAKRKEREREREREREREE) is disordered. A compositionally biased stretch (basic and acidic residues) spans 867–881 (KEREREREREREREE).

The protein belongs to the patched family.

The protein resides in the cell membrane. The protein localises to the cell projection. It is found in the dendritic spine. Its function is as follows. Can bind cholesterol in vitro. The sequence is that of Patched domain-containing protein 1 (ptchd1) from Danio rerio (Zebrafish).